The chain runs to 883 residues: Serine/threonine-protein kinase greatwall (883 aa).

At Met1 the chain carries N-acetylmethionine. Positions 35–839 constitute a Protein kinase domain; that stretch reads FTIVKPISRG…IKELKCHPLF (805 aa). Residues 41-49 and Lys62 each bind ATP; that span reads ISRGAFGKV. Asp156 (proton acceptor) is an active-site residue. Phosphothreonine occurs at positions 209 and 224. Phosphoserine is present on residues Ser295, Ser373, and Ser456. Residue Thr523 is modified to Phosphothreonine. Phosphoserine is present on residues Ser555, Ser559, Ser634, Ser661, and Ser672. At Thr726 the chain carries Phosphothreonine. Ser729 carries the post-translational modification Phosphoserine. Phosphothreonine; by CDK1 is present on Thr745. The 44-residue stretch at 840-883 folds into the AGC-kinase C-terminal domain; that stretch reads SDVDWENLQHQTMPFIPQPDDETDTSYFEARNNAQHLTVSGFSL. Phosphoserine occurs at positions 879 and 882.

This sequence belongs to the protein kinase superfamily. AGC Ser/Thr protein kinase family. Post-translationally, phosphorylation at Thr-745 by CDK1 during M phase activates its kinase activity. Maximum phosphorylation occurs in prometaphase.

The protein resides in the cytoplasm. The protein localises to the cytoskeleton. It localises to the microtubule organizing center. It is found in the centrosome. Its subcellular location is the nucleus. It catalyses the reaction L-seryl-[protein] + ATP = O-phospho-L-seryl-[protein] + ADP + H(+). The catalysed reaction is L-threonyl-[protein] + ATP = O-phospho-L-threonyl-[protein] + ADP + H(+). Functionally, serine/threonine kinase that plays a key role in M phase by acting as a regulator of mitosis entry and maintenance. Acts by promoting the inactivation of protein phosphatase 2A (PP2A) during M phase: does not directly inhibit PP2A but acts by mediating phosphorylation and subsequent activation of ARPP19 and ENSA at 'Ser-62' and 'Ser-67', respectively. ARPP19 and ENSA are phosphatase inhibitors that specifically inhibit the PPP2R2D (PR55-delta) subunit of PP2A. Inactivation of PP2A during M phase is essential to keep cyclin-B1-CDK1 activity high. Following DNA damage, it is also involved in checkpoint recovery by being inhibited. In Canis lupus familiaris (Dog), this protein is Serine/threonine-protein kinase greatwall (MASTL).